A 162-amino-acid chain; its full sequence is Putative 4-hydroxy-4-methyl-2-oxoglutarate aldolase (162 aa).

Substrate-binding positions include Gly75–Leu78 and Arg97. Asp98 contributes to the a divalent metal cation binding site.

This sequence belongs to the class II aldolase/RraA-like family. Homotrimer. Requires a divalent metal cation as cofactor.

It carries out the reaction 4-hydroxy-4-methyl-2-oxoglutarate = 2 pyruvate. The catalysed reaction is oxaloacetate + H(+) = pyruvate + CO2. Catalyzes the aldol cleavage of 4-hydroxy-4-methyl-2-oxoglutarate (HMG) into 2 molecules of pyruvate. Also contains a secondary oxaloacetate (OAA) decarboxylase activity due to the common pyruvate enolate transition state formed following C-C bond cleavage in the retro-aldol and decarboxylation reactions. The protein is Putative 4-hydroxy-4-methyl-2-oxoglutarate aldolase of Ectopseudomonas mendocina (strain ymp) (Pseudomonas mendocina).